The following is a 185-amino-acid chain: Pyridoxal 5'-phosphate synthase subunit PdxT (185 aa).

46–48 contacts L-glutamine; it reads GES. Residue Cys-75 is the Nucleophile of the active site. L-glutamine-binding positions include Arg-101 and 129–130; that span reads IR. Active-site charge relay system residues include His-165 and Glu-167.

The protein belongs to the glutaminase PdxT/SNO family. In the presence of PdxS, forms a dodecamer of heterodimers. Only shows activity in the heterodimer.

The enzyme catalyses aldehydo-D-ribose 5-phosphate + D-glyceraldehyde 3-phosphate + L-glutamine = pyridoxal 5'-phosphate + L-glutamate + phosphate + 3 H2O + H(+). The catalysed reaction is L-glutamine + H2O = L-glutamate + NH4(+). It functions in the pathway cofactor biosynthesis; pyridoxal 5'-phosphate biosynthesis. Its function is as follows. Catalyzes the hydrolysis of glutamine to glutamate and ammonia as part of the biosynthesis of pyridoxal 5'-phosphate. The resulting ammonia molecule is channeled to the active site of PdxS. The polypeptide is Pyridoxal 5'-phosphate synthase subunit PdxT (Staphylococcus epidermidis (strain ATCC 12228 / FDA PCI 1200)).